A 906-amino-acid polypeptide reads, in one-letter code: Protein translocase subunit SecA (906 aa).

ATP-binding positions include Gln-87, 105-109 (GEGKT), and Asp-507. Zn(2+)-binding residues include Cys-890, Cys-892, Cys-901, and His-902.

The protein belongs to the SecA family. As to quaternary structure, monomer and homodimer. Part of the essential Sec protein translocation apparatus which comprises SecA, SecYEG and auxiliary proteins SecDF-YajC and YidC. Zn(2+) is required as a cofactor.

It is found in the cell inner membrane. Its subcellular location is the cytoplasm. The catalysed reaction is ATP + H2O + cellular proteinSide 1 = ADP + phosphate + cellular proteinSide 2.. Functionally, part of the Sec protein translocase complex. Interacts with the SecYEG preprotein conducting channel. Has a central role in coupling the hydrolysis of ATP to the transfer of proteins into and across the cell membrane, serving both as a receptor for the preprotein-SecB complex and as an ATP-driven molecular motor driving the stepwise translocation of polypeptide chains across the membrane. In Laribacter hongkongensis (strain HLHK9), this protein is Protein translocase subunit SecA.